The chain runs to 401 residues: Argininosuccinate synthase (401 aa).

ATP is bound by residues 7 to 15 and A34; that span reads AYSGGLDTS. Residues Y85 and S90 each contribute to the L-citrulline site. G115 contacts ATP. Positions 117, 121, and 122 each coordinate L-aspartate. N121 is an L-citrulline binding site. L-citrulline contacts are provided by R125, S174, S183, E259, and Y271.

Belongs to the argininosuccinate synthase family. Type 1 subfamily. Homotetramer.

It is found in the cytoplasm. It carries out the reaction L-citrulline + L-aspartate + ATP = 2-(N(omega)-L-arginino)succinate + AMP + diphosphate + H(+). The protein operates within amino-acid biosynthesis; L-arginine biosynthesis; L-arginine from L-ornithine and carbamoyl phosphate: step 2/3. This chain is Argininosuccinate synthase, found in Desulfitobacterium hafniense (strain DSM 10664 / DCB-2).